The chain runs to 88 residues: FAD assembly factor SdhE (88 aa).

Belongs to the SdhE FAD assembly factor family. Monomer. Makes weak or transient interactions with SdhA. Interacts with YgfX. Interacts with FrdA.

Its subcellular location is the cytoplasm. Its pathway is antibiotic biosynthesis; prodigiosin biosynthesis. Functionally, an FAD assembly protein, which accelerates covalent attachment of the cofactor into other proteins. Plays an essential role in the assembly of succinate dehydrogenase (SDH, respiratory complex II), an enzyme complex that is a component of both the tricarboxylic acid cycle and the electron transport chain, and which couples the oxidation of succinate to fumarate with the reduction of ubiquinone (coenzyme Q) to ubiquinol. Required for flavinylation (covalent attachment of FAD) of the flavoprotein subunit SdhA of SDH. Required for flavinylation of the flavoprotein subunit FrdA of fumarate reductase (FRD). Flavinylation of SDH and FRD occurs in a similar but not identical manner, as site-specific mutations display subtle differences between them. Flavinylates SdhA in vivo in the absence of the other SDH subunits; SdhE mutants that do not flavinylate also interfere with wild-type activity in a possible dominant-negative fashion. Weakly binds to FAD and facilitates its binding to SdhA. Required for production of prodigiosin antibiotic (Pig); overproduction of SdhE in a deletion mutant leads to decreased synthesis of Pig compared to wild-type. Capable of flavinylating A.pasteurianus SdhA when the SDH operon and this gene are expressed in G.oxydans; flavinylation of SdhA is detected only in the presence of sdhE. This Serratia sp. (strain ATCC 39006) (Prodigiosinella confusarubida) protein is FAD assembly factor SdhE.